The following is a 184-amino-acid chain: ATP synthase subunit delta (184 aa).

This sequence belongs to the ATPase delta chain family. In terms of assembly, F-type ATPases have 2 components, F(1) - the catalytic core - and F(0) - the membrane proton channel. F(1) has five subunits: alpha(3), beta(3), gamma(1), delta(1), epsilon(1). F(0) has three main subunits: a(1), b(2) and c(10-14). The alpha and beta chains form an alternating ring which encloses part of the gamma chain. F(1) is attached to F(0) by a central stalk formed by the gamma and epsilon chains, while a peripheral stalk is formed by the delta and b chains.

Its subcellular location is the cell inner membrane. Functionally, f(1)F(0) ATP synthase produces ATP from ADP in the presence of a proton or sodium gradient. F-type ATPases consist of two structural domains, F(1) containing the extramembraneous catalytic core and F(0) containing the membrane proton channel, linked together by a central stalk and a peripheral stalk. During catalysis, ATP synthesis in the catalytic domain of F(1) is coupled via a rotary mechanism of the central stalk subunits to proton translocation. In terms of biological role, this protein is part of the stalk that links CF(0) to CF(1). It either transmits conformational changes from CF(0) to CF(1) or is implicated in proton conduction. The sequence is that of ATP synthase subunit delta from Phenylobacterium zucineum (strain HLK1).